Reading from the N-terminus, the 572-residue chain is Glutathione hydrolase 1 (572 aa).

Residues 1-22 form the signal peptide; it reads MSLVRTVTIVLFIIAFLQNAAA. Position 99 (Arg-99) interacts with L-glutamate. N-linked (GlcNAc...) asparagine glycosylation is found at Asn-171 and Asn-222. Residue Thr-368 is the Nucleophile of the active site. L-glutamate is bound by residues Thr-386, Asn-388, Glu-407, Asp-410, 440–441, and 461–462; these read SS and GG. N-linked (GlcNAc...) asparagine glycosylation is present at Asn-505. The disordered stretch occupies residues 552 to 572; that stretch reads GGRSELVAVSDPRKGGFPSGY.

This sequence belongs to the gamma-glutamyltransferase family. In terms of tissue distribution, expressed in embryo, roots and leaves. In mature plants, expression is restricted to vascular tissues of roots, leaves, flowers and siliques.

The protein localises to the secreted. It localises to the extracellular space. Its subcellular location is the apoplast. It catalyses the reaction an N-terminal (5-L-glutamyl)-[peptide] + an alpha-amino acid = 5-L-glutamyl amino acid + an N-terminal L-alpha-aminoacyl-[peptide]. The catalysed reaction is glutathione + H2O = L-cysteinylglycine + L-glutamate. It carries out the reaction an S-substituted glutathione + H2O = an S-substituted L-cysteinylglycine + L-glutamate. It participates in sulfur metabolism; glutathione metabolism. In terms of biological role, may play a role in preventing oxidative stress by metabolizing extracellular oxidized glutathione (GSSG). This Arabidopsis thaliana (Mouse-ear cress) protein is Glutathione hydrolase 1 (GGT1).